Consider the following 521-residue polypeptide: Glutamyl-tRNA(Gln) amidotransferase subunit A, mitochondrial (521 aa).

Catalysis depends on charge relay system residues Lys-61 and Ser-139. The active-site Acyl-ester intermediate is the Ser-163.

It belongs to the amidase family. GatA subfamily. As to quaternary structure, subunit of the heterotrimeric GatCAB amidotransferase (AdT) complex, composed of A, B and C subunits.

The protein localises to the mitochondrion. The enzyme catalyses L-glutamyl-tRNA(Gln) + L-glutamine + ATP + H2O = L-glutaminyl-tRNA(Gln) + L-glutamate + ADP + phosphate + H(+). Allows the formation of correctly charged Gln-tRNA(Gln) through the transamidation of misacylated Glu-tRNA(Gln) in the mitochondria. The reaction takes place in the presence of glutamine and ATP through an activated gamma-phospho-Glu-tRNA(Gln). In Ajellomyces capsulatus (strain G186AR / H82 / ATCC MYA-2454 / RMSCC 2432) (Darling's disease fungus), this protein is Glutamyl-tRNA(Gln) amidotransferase subunit A, mitochondrial.